We begin with the raw amino-acid sequence, 386 residues long: Large ribosomal subunit protein uL4 (386 aa).

Over residues 341–357 (VEQRRLKEKQAKLDQKR) the composition is skewed to basic and acidic residues. Positions 341–386 (VEQRRLKEKQAKLDQKRGIATPVEGAGKGRPRKTTAKPTKAKAGKK) are disordered. Over residues 369–386 (GRPRKTTAKPTKAKAGKK) the composition is skewed to basic residues.

This sequence belongs to the universal ribosomal protein uL4 family.

The polypeptide is Large ribosomal subunit protein uL4 (RPL4) (Urechis caupo (Innkeeper worm)).